A 466-amino-acid chain; its full sequence is 3-isopropylmalate dehydratase large subunit (466 aa).

[4Fe-4S] cluster contacts are provided by cysteine 347, cysteine 407, and cysteine 410.

It belongs to the aconitase/IPM isomerase family. LeuC type 1 subfamily. Heterodimer of LeuC and LeuD. [4Fe-4S] cluster is required as a cofactor.

The enzyme catalyses (2R,3S)-3-isopropylmalate = (2S)-2-isopropylmalate. The protein operates within amino-acid biosynthesis; L-leucine biosynthesis; L-leucine from 3-methyl-2-oxobutanoate: step 2/4. Functionally, catalyzes the isomerization between 2-isopropylmalate and 3-isopropylmalate, via the formation of 2-isopropylmaleate. This Escherichia coli (strain 55989 / EAEC) protein is 3-isopropylmalate dehydratase large subunit.